The primary structure comprises 363 residues: MKAFLVLDNGMILEGESFGYESESVGEIVFNTSMAGYQEILTDPSYCNQIITLTYPMIGNYGIHPDNMESSKIQASGLIVREYVDLPSNFMSQKTLSKFLKEYQIPAIQGIDTRKLTRYIRTNGSPNGGIFVAREYSPEFLEKVKSFPGITGTDLAKVVTTSTKYIFGTHTGKKYKLAVYDYGVKTNILRLLDAAGFAVTVYPALTPAEEIMKEGTDAFFLSNGPGDPAPLDYAIDATRKIMEKGYPLFGICLGHQIIGLSLGKKTEKMKFGHRGGNQPVKNLSTGQVEITSQNHGFAVIDDGKSSEPVSFLNLNDNTVEGILKSGYPLLTVQYHPESAPGPNDSRYLFQKFYDLVETTKRGK.

The CPSase stretch occupies residues 1 to 172 (MKAFLVLDNG…TKYIFGTHTG (172 aa)). L-glutamine contacts are provided by Ser45, Gly224, and Gly226. Residues 176-362 (KLAVYDYGVK…YDLVETTKRG (187 aa)) form the Glutamine amidotransferase type-1 domain. The Nucleophile role is filled by Cys252. Positions 253, 256, 294, 296, and 297 each coordinate L-glutamine. Active-site residues include His335 and Glu337.

Belongs to the CarA family. In terms of assembly, composed of two chains; the small (or glutamine) chain promotes the hydrolysis of glutamine to ammonia, which is used by the large (or ammonia) chain to synthesize carbamoyl phosphate. Tetramer of heterodimers (alpha,beta)4.

It carries out the reaction hydrogencarbonate + L-glutamine + 2 ATP + H2O = carbamoyl phosphate + L-glutamate + 2 ADP + phosphate + 2 H(+). The enzyme catalyses L-glutamine + H2O = L-glutamate + NH4(+). It functions in the pathway amino-acid biosynthesis; L-arginine biosynthesis; carbamoyl phosphate from bicarbonate: step 1/1. The protein operates within pyrimidine metabolism; UMP biosynthesis via de novo pathway; (S)-dihydroorotate from bicarbonate: step 1/3. In terms of biological role, small subunit of the glutamine-dependent carbamoyl phosphate synthetase (CPSase). CPSase catalyzes the formation of carbamoyl phosphate from the ammonia moiety of glutamine, carbonate, and phosphate donated by ATP, constituting the first step of 2 biosynthetic pathways, one leading to arginine and/or urea and the other to pyrimidine nucleotides. The small subunit (glutamine amidotransferase) binds and cleaves glutamine to supply the large subunit with the substrate ammonia. In Leptospira borgpetersenii serovar Hardjo-bovis (strain L550), this protein is Carbamoyl phosphate synthase small chain.